We begin with the raw amino-acid sequence, 264 residues long: Catechol O-methyltransferase B (264 aa).

The N-terminal stretch at 1–29 (MLGVLLCWCLGASVLLYVLYSWLIPAAVQ) is a signal peptide. Asn-31 carries N-linked (GlcNAc...) asparagine glycosylation. Val-92, Ser-122, Glu-140, and Asp-191 together coordinate S-adenosyl-L-methionine. A Mg(2+)-binding site is contributed by Asp-191. Lys-194 is a binding site for substrate. Mg(2+) is bound by residues Asp-219 and Asn-220. The substrate site is built by Asn-220 and Glu-249.

It belongs to the class I-like SAM-binding methyltransferase superfamily. Cation-dependent O-methyltransferase family. Mg(2+) serves as cofactor. In terms of tissue distribution, strongly expressed in eye, diencephalon, spinal cord, hindbrain, liver, kidney and telencephalon. Also detected at very low levels in muscle, spleen, anterior gut and heart. In eye, expressed strongly in retina. In brain, expressed in the central part of the telencephalon, the periventricular gray zone of the optic tectum, the periglomerular nucleus, the olfactory bulb, and the region adjacent to the diencephalic ventricle in the hypothalamus. Expressed in gill, with strongest expression in gill filaments nearest the gill arch, and in esophageal epithelium.

It is found in the secreted. The enzyme catalyses a catechol + S-adenosyl-L-methionine = a guaiacol + S-adenosyl-L-homocysteine + H(+). In terms of biological role, catalyzes the O-methylation, and thereby the inactivation, of catecholamine neurotransmitters and catechol hormones. In Danio rerio (Zebrafish), this protein is Catechol O-methyltransferase B.